The sequence spans 289 residues: Acetyl-coenzyme A carboxylase carboxyl transferase subunit beta (289 aa).

A CoA carboxyltransferase N-terminal domain is found at 28–289 (LWSKCPSCEA…ALLQKLPAAA (262 aa)). The Zn(2+) site is built by C32, C35, C51, and C54. The C4-type zinc-finger motif lies at 32-54 (CPSCEAVLYATDLENNLQVCPKC).

This sequence belongs to the AccD/PCCB family. As to quaternary structure, acetyl-CoA carboxylase is a heterohexamer composed of biotin carboxyl carrier protein (AccB), biotin carboxylase (AccC) and two subunits each of ACCase subunit alpha (AccA) and ACCase subunit beta (AccD). Zn(2+) is required as a cofactor.

It localises to the cytoplasm. The enzyme catalyses N(6)-carboxybiotinyl-L-lysyl-[protein] + acetyl-CoA = N(6)-biotinyl-L-lysyl-[protein] + malonyl-CoA. Its pathway is lipid metabolism; malonyl-CoA biosynthesis; malonyl-CoA from acetyl-CoA: step 1/1. Functionally, component of the acetyl coenzyme A carboxylase (ACC) complex. Biotin carboxylase (BC) catalyzes the carboxylation of biotin on its carrier protein (BCCP) and then the CO(2) group is transferred by the transcarboxylase to acetyl-CoA to form malonyl-CoA. This is Acetyl-coenzyme A carboxylase carboxyl transferase subunit beta from Dechloromonas aromatica (strain RCB).